A 999-amino-acid polypeptide reads, in one-letter code: Probable hemoglobin and hemoglobin-haptoglobin-binding protein 4 (999 aa).

Residues 1-24 (MTNFRLNVLAYSVMLGLTASVAYA) form the signal peptide. The tract at residues 25-52 (EPTNQPTNQPTNQPTNQPTNQPTNQNSN) is disordered. 6 tandem repeats follow at residues 26–29 (PTNQ), 30–33 (PTNQ), 34–37 (PTNQ), 38–41 (PTNQ), 42–45 (PTNQ), and 46–49 (PTNQ). Positions 26–49 (PTNQPTNQPTNQPTNQPTNQPTNQ) are 6 X 4 AA tandem repeats of P-T-N-Q. Residues 26–50 (PTNQPTNQPTNQPTNQPTNQPTNQN) show a composition bias toward low complexity. Residues 58–65 (EQINVLGS) carry the TonB box motif. The TBDR plug domain maps to 68 to 195 (NNDNTPPKIA…LGGAVLFETK (128 aa)). The TBDR beta-barrel domain occupies 203 to 999 (EKDWHIGYKA…NYKLSAEITF (797 aa)). The TonB C-terminal box motif lies at 982-999 (NRFYSPGRNYKLSAEITF).

Belongs to the TonB-dependent receptor family. Hemoglobin/haptoglobin binding protein subfamily.

The protein resides in the cell outer membrane. Functionally, acts as a receptor for hemoglobin or the hemoglobin/haptoglobin complex of the human host and is required for heme uptake. The protein is Probable hemoglobin and hemoglobin-haptoglobin-binding protein 4 of Haemophilus influenzae (strain ATCC 51907 / DSM 11121 / KW20 / Rd).